Here is a 559-residue protein sequence, read N- to C-terminus: Asparagine--tRNA ligase, cytoplasmic (559 aa).

The residue at position 72 (serine 72) is a Phosphoserine. An N6-acetyllysine mark is found at lysine 255 and lysine 501.

The protein belongs to the class-II aminoacyl-tRNA synthetase family.

It localises to the cytoplasm. The enzyme catalyses tRNA(Asn) + L-asparagine + ATP = L-asparaginyl-tRNA(Asn) + AMP + diphosphate + H(+). This Bos taurus (Bovine) protein is Asparagine--tRNA ligase, cytoplasmic (NARS).